The primary structure comprises 319 residues: Methionyl-tRNA formyltransferase (319 aa).

112–115 is a (6S)-5,6,7,8-tetrahydrofolate binding site; the sequence is SLLP.

It belongs to the Fmt family.

The catalysed reaction is L-methionyl-tRNA(fMet) + (6R)-10-formyltetrahydrofolate = N-formyl-L-methionyl-tRNA(fMet) + (6S)-5,6,7,8-tetrahydrofolate + H(+). Its function is as follows. Attaches a formyl group to the free amino group of methionyl-tRNA(fMet). The formyl group appears to play a dual role in the initiator identity of N-formylmethionyl-tRNA by promoting its recognition by IF2 and preventing the misappropriation of this tRNA by the elongation apparatus. In Pelobacter propionicus (strain DSM 2379 / NBRC 103807 / OttBd1), this protein is Methionyl-tRNA formyltransferase.